The primary structure comprises 389 residues: Chitinase-3-like protein 1 (389 aa).

Positions 1–29 (MHTSTEARMGMRAALTGFAVLMLLQSCSA) are cleaved as a signal peptide. One can recognise a GH18 domain in the interval 30 to 389 (YKLVCYFTSW…LTNAIKDALA (360 aa)). A disulfide bridge connects residues Cys34 and Cys59. An N-linked (GlcNAc...) asparagine glycan is attached at Asn68. Residues 79–80 (EW), 106–109 (GGWK), Tyr150, and 213–216 (MTYD) each bind chitin. Cysteines 309 and 372 form a disulfide. Residues 333–347 (QWVGYEDKESVKNKV) are important for AKT1 activation and IL8 production. Trp361 is a binding site for chitin.

This sequence belongs to the glycosyl hydrolase 18 family. As to quaternary structure, monomer. Detected in lung in pulmonary macrophages and alveolar type 2 cells and in bronchoalveolar lavage (BAL) fluids. Expressed in mammary tumor cells (at protein level). Expressed in lung. Not detected in non-inflammatory colon.

It localises to the secreted. Its subcellular location is the extracellular space. The protein localises to the cytoplasm. The protein resides in the endoplasmic reticulum. Its function is as follows. Carbohydrate-binding lectin with a preference for chitin. Has no chitinase activity. May play a role in tissue remodeling and in the capacity of cells to respond to and cope with changes in their environment. Plays a role in T-helper cell type 2 (Th2) inflammatory response and IL-13-induced inflammation, regulating allergen sensitization, inflammatory cell apoptosis, dendritic cell accumulation and M2 macrophage differentiation. Facilitates invasion of pathogenic enteric bacteria into colonic mucosa and lymphoid organs. Mediates activation of AKT1 signaling pathway and subsequent IL8 production in colonic epithelial cells. Regulates antibacterial responses in lung by contributing to macrophage bacterial killing, controlling bacterial dissemination and augmenting host tolerance. Also regulates hyperoxia-induced injury, inflammation and epithelial apoptosis in lung. This Mus musculus (Mouse) protein is Chitinase-3-like protein 1 (Chi3l1).